Consider the following 88-residue polypeptide: uncharacterized protein (88 aa).

The next 2 membrane-spanning stretches (helical) occupy residues 27–46 and 61–83; these read LFIF…ETPH and SMCL…LILI.

It localises to the membrane. This is an uncharacterized protein from Saccharomyces cerevisiae (strain ATCC 204508 / S288c) (Baker's yeast).